We begin with the raw amino-acid sequence, 421 residues long: tRNA(Ile)-lysidine synthase (421 aa).

Residue 26–31 (SGGADS) coordinates ATP.

The protein belongs to the tRNA(Ile)-lysidine synthase family.

Its subcellular location is the cytoplasm. It catalyses the reaction cytidine(34) in tRNA(Ile2) + L-lysine + ATP = lysidine(34) in tRNA(Ile2) + AMP + diphosphate + H(+). Functionally, ligates lysine onto the cytidine present at position 34 of the AUA codon-specific tRNA(Ile) that contains the anticodon CAU, in an ATP-dependent manner. Cytidine is converted to lysidine, thus changing the amino acid specificity of the tRNA from methionine to isoleucine. This Streptococcus thermophilus (strain CNRZ 1066) protein is tRNA(Ile)-lysidine synthase.